The following is a 529-amino-acid chain: Methionine--tRNA ligase (529 aa).

Residues Y12–S22 carry the 'HIGH' region motif. Zn(2+) contacts are provided by C127, C130, C145, and H148. The 'KMSKS' region signature appears at K301–S305. K304 is an ATP binding site.

This sequence belongs to the class-I aminoacyl-tRNA synthetase family. MetG type 2A subfamily. As to quaternary structure, monomer. Zn(2+) serves as cofactor.

The protein localises to the cytoplasm. The enzyme catalyses tRNA(Met) + L-methionine + ATP = L-methionyl-tRNA(Met) + AMP + diphosphate. In terms of biological role, is required not only for elongation of protein synthesis but also for the initiation of all mRNA translation through initiator tRNA(fMet) aminoacylation. In Thermosynechococcus vestitus (strain NIES-2133 / IAM M-273 / BP-1), this protein is Methionine--tRNA ligase.